The sequence spans 127 residues: Large ribosomal subunit protein eL8 (127 aa).

It belongs to the eukaryotic ribosomal protein eL8 family. In terms of assembly, part of the 50S ribosomal subunit. Probably part of the RNase P complex.

It localises to the cytoplasm. Functionally, multifunctional RNA-binding protein that recognizes the K-turn motif in ribosomal RNA, the RNA component of RNase P, box H/ACA, box C/D and box C'/D' sRNAs. This chain is Large ribosomal subunit protein eL8, found in Aeropyrum pernix (strain ATCC 700893 / DSM 11879 / JCM 9820 / NBRC 100138 / K1).